The primary structure comprises 183 residues: Lipid droplet coating protein Cap20 (183 aa).

The protein belongs to the perilipin family.

The protein resides in the lipid droplet. Functionally, lipid droplet coating protein that regulates lipid metabolism, appressorial turgor pressure, and virulence. Appressorial turgor pressure is important for the mechanical penetration of the host cuticle during infection. This is Lipid droplet coating protein Cap20 (Cap20) from Colletotrichum gloeosporioides (Anthracnose fungus).